The primary structure comprises 331 residues: Phosphate acyltransferase (331 aa).

The protein belongs to the PlsX family. In terms of assembly, homodimer. Probably interacts with PlsY.

It is found in the cytoplasm. It carries out the reaction a fatty acyl-[ACP] + phosphate = an acyl phosphate + holo-[ACP]. It participates in lipid metabolism; phospholipid metabolism. Its function is as follows. Catalyzes the reversible formation of acyl-phosphate (acyl-PO(4)) from acyl-[acyl-carrier-protein] (acyl-ACP). This enzyme utilizes acyl-ACP as fatty acyl donor, but not acyl-CoA. The sequence is that of Phosphate acyltransferase from Mesoplasma florum (strain ATCC 33453 / NBRC 100688 / NCTC 11704 / L1) (Acholeplasma florum).